The following is a 174-amino-acid chain: Ribosome rescue factor SmrB (174 aa).

The 76-residue stretch at 96-171 folds into the Smr domain; sequence LDLHGMNQQQ…GDSAILVLLD (76 aa).

It belongs to the SmrB family. In terms of assembly, associates with collided ribosomes, but not with correctly translating polysomes.

Functionally, acts as a ribosome collision sensor. Detects stalled/collided disomes (pairs of ribosomes where the leading ribosome is stalled and a second ribosome has collided with it) and endonucleolytically cleaves mRNA at the 5' boundary of the stalled ribosome. Stalled/collided disomes form a new interface (primarily via the 30S subunits) that binds SmrB. Cleaved mRNA becomes available for tmRNA ligation, leading to ribosomal subunit dissociation and rescue of stalled ribosomes. The polypeptide is Ribosome rescue factor SmrB (Aeromonas hydrophila subsp. hydrophila (strain ATCC 7966 / DSM 30187 / BCRC 13018 / CCUG 14551 / JCM 1027 / KCTC 2358 / NCIMB 9240 / NCTC 8049)).